A 356-amino-acid chain; its full sequence is Holliday junction branch migration complex subunit RuvB (356 aa).

Residues 1–14 (MAIVSSITNHSSLP) show a composition bias toward polar residues. Positions 1–20 (MAIVSSITNHSSLPNDKGEE) are disordered. The large ATPase domain (RuvB-L) stretch occupies residues 13-201 (LPNDKGEERL…FGITQRLDFY (189 aa)). The ATP site is built by Leu-40, Arg-41, Gly-82, Lys-85, Thr-86, Thr-87, Arg-191, Tyr-201, and Arg-238. Thr-86 contacts Mg(2+). Residues 202–273 (NYLDLENIIK…VVNDALDLHR (72 aa)) form a small ATPAse domain (RuvB-S) region. Residues 276–356 (QRGLDATDRS…LLTSPNNIDK (81 aa)) are head domain (RuvB-H). Positions 331 and 336 each coordinate DNA.

The protein belongs to the RuvB family. Homohexamer. Forms an RuvA(8)-RuvB(12)-Holliday junction (HJ) complex. HJ DNA is sandwiched between 2 RuvA tetramers; dsDNA enters through RuvA and exits via RuvB. An RuvB hexamer assembles on each DNA strand where it exits the tetramer. Each RuvB hexamer is contacted by two RuvA subunits (via domain III) on 2 adjacent RuvB subunits; this complex drives branch migration. In the full resolvosome a probable DNA-RuvA(4)-RuvB(12)-RuvC(2) complex forms which resolves the HJ.

The protein localises to the cytoplasm. It carries out the reaction ATP + H2O = ADP + phosphate + H(+). In terms of biological role, the RuvA-RuvB-RuvC complex processes Holliday junction (HJ) DNA during genetic recombination and DNA repair, while the RuvA-RuvB complex plays an important role in the rescue of blocked DNA replication forks via replication fork reversal (RFR). RuvA specifically binds to HJ cruciform DNA, conferring on it an open structure. The RuvB hexamer acts as an ATP-dependent pump, pulling dsDNA into and through the RuvAB complex. RuvB forms 2 homohexamers on either side of HJ DNA bound by 1 or 2 RuvA tetramers; 4 subunits per hexamer contact DNA at a time. Coordinated motions by a converter formed by DNA-disengaged RuvB subunits stimulates ATP hydrolysis and nucleotide exchange. Immobilization of the converter enables RuvB to convert the ATP-contained energy into a lever motion, pulling 2 nucleotides of DNA out of the RuvA tetramer per ATP hydrolyzed, thus driving DNA branch migration. The RuvB motors rotate together with the DNA substrate, which together with the progressing nucleotide cycle form the mechanistic basis for DNA recombination by continuous HJ branch migration. Branch migration allows RuvC to scan DNA until it finds its consensus sequence, where it cleaves and resolves cruciform DNA. The protein is Holliday junction branch migration complex subunit RuvB of Prochlorococcus marinus (strain NATL2A).